Reading from the N-terminus, the 201-residue chain is 3-isopropylmalate dehydratase small subunit (201 aa).

Belongs to the LeuD family. LeuD type 1 subfamily. As to quaternary structure, heterodimer of LeuC and LeuD.

The catalysed reaction is (2R,3S)-3-isopropylmalate = (2S)-2-isopropylmalate. The protein operates within amino-acid biosynthesis; L-leucine biosynthesis; L-leucine from 3-methyl-2-oxobutanoate: step 2/4. Its function is as follows. Catalyzes the isomerization between 2-isopropylmalate and 3-isopropylmalate, via the formation of 2-isopropylmaleate. The protein is 3-isopropylmalate dehydratase small subunit of Dinoroseobacter shibae (strain DSM 16493 / NCIMB 14021 / DFL 12).